We begin with the raw amino-acid sequence, 2604 residues long: Probable polyketide synthase 17 (2604 aa).

The Ketosynthase family 3 (KS3) domain maps to 11–433; the sequence is NDDIAIIGMG…GSNCHMILSE (423 aa). Active-site for beta-ketoacyl synthase activity residues include C179, H316, and H356. Residues 631–664 are acyl/malonyl transferases; sequence GISPSIVVGHSFGEIPSALFSDVISLETAVKIVY. Residue S641 is the For acyl/malonyl transferase activity of the active site. The tract at residues 937–1057 is N-terminal hotdog fold; it reads NNLLGHDQFA…GRIGLFKHNP (121 aa). The region spanning 937–1216 is the PKS/mFAS DH domain; sequence NNLLGHDQFA…CTSLIRLKKQ (280 aa). The Proton acceptor; for dehydratase activity role is filled by H968. Positions 1072-1216 are C-terminal hotdog fold; the sequence is SFTTLTKSEV…CTSLIRLKKQ (145 aa). Residue D1132 is the Proton donor; for dehydratase activity of the active site. The interval 1357-1407 is disordered; that stretch reads GESEHFSPSNPSSPNDTPRNNSNNCSSKNNAASSDDADDDTNNEETINQLN. Over residues 1363–1390 the composition is skewed to low complexity; that stretch reads SPSNPSSPNDTPRNNSNNCSSKNNAASS. Positions 2507-2584 constitute a Carrier domain; the sequence is GDSGSTQAKV…SIIQRISSKS (78 aa). S2544 bears the O-(pantetheine 4'-phosphoryl)serine mark. The segment covering 2581 to 2597 has biased composition (low complexity); the sequence is SSKSTSTSTPNPTNTSK. Positions 2581–2604 are disordered; the sequence is SSKSTSTSTPNPTNTSKQTATKKT.

Pantetheine 4'-phosphate is required as a cofactor.

Functionally, probable polyketide synthase. The chain is Probable polyketide synthase 17 (pks17) from Dictyostelium discoideum (Social amoeba).